Consider the following 248-residue polypeptide: 5'-nucleotidase SurE (248 aa).

4 residues coordinate a divalent metal cation: Asp8, Asp9, Ser39, and Asn91.

This sequence belongs to the SurE nucleotidase family. Requires a divalent metal cation as cofactor.

Its subcellular location is the cytoplasm. The enzyme catalyses a ribonucleoside 5'-phosphate + H2O = a ribonucleoside + phosphate. Functionally, nucleotidase that shows phosphatase activity on nucleoside 5'-monophosphates. This chain is 5'-nucleotidase SurE, found in Pseudoalteromonas atlantica (strain T6c / ATCC BAA-1087).